Here is a 564-residue protein sequence, read N- to C-terminus: Cysteine--tRNA ligase CPS1, chloroplastic/mitochondrial (564 aa).

A chloroplast and mitochondrion-targeting transit peptide spans 1–43 (MAAAVVVRRAAGLIPLLSSRFGARMPLHRALSQIPPPRFCRLL). Cys-93 contributes to the Zn(2+) binding site. The 'HIGH' region motif lies at 95–105 (VTPYDDSHIGH). Residues Cys-273, His-298, and Glu-302 each contribute to the Zn(2+) site. A 'KMSKS' region motif is present at residues 330–334 (KMSKS). Residue Lys-333 participates in ATP binding.

Belongs to the class-I aminoacyl-tRNA synthetase family. Zn(2+) serves as cofactor.

It is found in the plastid. It localises to the chloroplast. Its subcellular location is the mitochondrion. It catalyses the reaction tRNA(Cys) + L-cysteine + ATP = L-cysteinyl-tRNA(Cys) + AMP + diphosphate. In terms of biological role, nuclear genome-encoded factor required for normal assembly of chloroplast polysomes. The sequence is that of Cysteine--tRNA ligase CPS1, chloroplastic/mitochondrial from Zea mays (Maize).